We begin with the raw amino-acid sequence, 419 residues long: L-rhamnose isomerase (419 aa).

Mn(2+) contacts are provided by histidine 262, aspartate 294, and aspartate 296.

Belongs to the rhamnose isomerase family. In terms of assembly, homotetramer. It depends on Mn(2+) as a cofactor.

The protein localises to the cytoplasm. The catalysed reaction is L-rhamnopyranose = L-rhamnulose. It participates in carbohydrate degradation; L-rhamnose degradation; glycerone phosphate from L-rhamnose: step 1/3. Functionally, catalyzes the interconversion of L-rhamnose and L-rhamnulose. This is L-rhamnose isomerase from Klebsiella pneumoniae subsp. pneumoniae (strain ATCC 700721 / MGH 78578).